Here is a 267-residue protein sequence, read N- to C-terminus: GTP cyclohydrolase FolE2 (267 aa).

This sequence belongs to the GTP cyclohydrolase IV family.

The enzyme catalyses GTP + H2O = 7,8-dihydroneopterin 3'-triphosphate + formate + H(+). The protein operates within cofactor biosynthesis; 7,8-dihydroneopterin triphosphate biosynthesis; 7,8-dihydroneopterin triphosphate from GTP: step 1/1. In terms of biological role, converts GTP to 7,8-dihydroneopterin triphosphate. This chain is GTP cyclohydrolase FolE2, found in Citrifermentans bemidjiense (strain ATCC BAA-1014 / DSM 16622 / JCM 12645 / Bem) (Geobacter bemidjiensis).